Here is a 570-residue protein sequence, read N- to C-terminus: Pentatricopeptide repeat-containing protein At1g31430 (570 aa).

13 PPR repeats span residues 10–44, 45–79, 80–110, 111–141, 147–177, 181–215, 216–242, 243–277, 278–312, 313–343, 344–378, 379–414, and 415–449; these read SLLMYNKMLKSLADGKSFTKVLALFGELRGQGLYP, DNFTLPVVLKSIGRLRKVIEGEKVHGYAVKAGLEF, DSYVSNSLMGMYASLGKIEITHKVFDEMPQR, DVVSWNGLISSYVGNGRFEDAIGVFKRMSQE, DEGTIVSTLSACSALKNLEIGERIYRFVVTE, SVRIGNALVDMFCKCGCLDKARAVFDSMRDKNVKC, WTSMVFGYVSTGRIDEARVLFERSPVK, DVVLWTAMMNGYVQFNRFDEALELFRCMQTAGIRP, DNFVLVSLLTGCAQTGALEQGKWIHGYINENRVTV, DKVVGTALVDMYAKCGCIETALEVFYEIKER, DTASWTSLIYGLAMNGMSGRALDLYYEMENVGVRL, DAITFVAVLTACNHGGFVAEGRKIFHSMTERHNVQP, and KSEHCSCLIDLLCRAGLLDEAEELIDKMRGESDET. Residues 453 to 528 are type E motif; it reads VYCSLLSAAR…FPGCSSIEID (76 aa). Residues 529–561 are type E(+) motif; it reads GVGHEFIVGDDLLSHPKMDEINSMLHQTTNLML.

It belongs to the PPR family. PCMP-E subfamily.

This chain is Pentatricopeptide repeat-containing protein At1g31430 (PCMP-E55), found in Arabidopsis thaliana (Mouse-ear cress).